Consider the following 293-residue polypeptide: Histamine N-methyltransferase (293 aa).

E28 is a binding site for substrate. G60, E89, Q94, S120, and I142 together coordinate S-adenosyl-L-methionine. N283 lines the substrate pocket.

Belongs to the class I-like SAM-binding methyltransferase superfamily. HNMT family. As to quaternary structure, monomer.

The protein resides in the cytoplasm. It catalyses the reaction histamine + S-adenosyl-L-methionine = N(tau)-methylhistamine + S-adenosyl-L-homocysteine + H(+). Its function is as follows. Inactivates histamine by N-methylation. Plays an important role in degrading histamine and in regulating the airway response to histamine. This chain is Histamine N-methyltransferase (hnmt), found in Xenopus tropicalis (Western clawed frog).